A 442-amino-acid polypeptide reads, in one-letter code: 4-hydroxyphenylpyruvate dioxygenase (442 aa).

2 VOC domains span residues Arg45 to Ala200 and Arg216 to Lys376. His219, His301, and Glu387 together coordinate Fe cation.

Belongs to the 4HPPD family. Requires Fe cation as cofactor.

The protein resides in the cytoplasm. The catalysed reaction is 3-(4-hydroxyphenyl)pyruvate + O2 = homogentisate + CO2. It functions in the pathway amino-acid degradation; L-phenylalanine degradation; acetoacetate and fumarate from L-phenylalanine: step 3/6. Its pathway is cofactor biosynthesis; prenylquinone biosynthesis. The sequence is that of 4-hydroxyphenylpyruvate dioxygenase from Daucus carota (Wild carrot).